Consider the following 458-residue polypeptide: NADH-quinone oxidoreductase subunit N (458 aa).

The next 14 membrane-spanning stretches (helical) occupy residues 2–22 (LLIL…CFAL), 30–50 (IIYN…FKYS), 62–82 (GINI…SLII), 93–113 (AIKF…FVAI), 118–138 (FLLL…LAGF), 153–173 (FILG…IYGF), 196–216 (LIIG…SSPL), 235–255 (FTSA…KLII), 261–281 (INYN…AFGA), 290–310 (LMAY…ILPN), 319–339 (LYIL…IMLF), 361–381 (IAAL…LTGF), 397–417 (FTLA…YLKV), and 438–458 (LLLI…IILF).

The protein belongs to the complex I subunit 2 family. In terms of assembly, NDH-1 is composed of 14 different subunits. Subunits NuoA, H, J, K, L, M, N constitute the membrane sector of the complex.

Its subcellular location is the cell inner membrane. It carries out the reaction a quinone + NADH + 5 H(+)(in) = a quinol + NAD(+) + 4 H(+)(out). Its function is as follows. NDH-1 shuttles electrons from NADH, via FMN and iron-sulfur (Fe-S) centers, to quinones in the respiratory chain. The immediate electron acceptor for the enzyme in this species is believed to be ubiquinone. Couples the redox reaction to proton translocation (for every two electrons transferred, four hydrogen ions are translocated across the cytoplasmic membrane), and thus conserves the redox energy in a proton gradient. The chain is NADH-quinone oxidoreductase subunit N from Rickettsia typhi (strain ATCC VR-144 / Wilmington).